The following is a 979-amino-acid chain: Calsyntenin-1 (979 aa).

Residues 1–28 form the signal peptide; the sequence is MLRRPAPALAPAVRLLLAGLLCGGGVWA. The Extracellular portion of the chain corresponds to 29–859; that stretch reads ARVNKHKPWL…PHPFAVVPST (831 aa). Cadherin domains follow at residues 38 to 164 and 165 to 265; these read LEPT…APVF and KEKS…SPGW. N346, N366, and N515 each carry an N-linked (GlcNAc...) asparagine glycan. Residues 860 to 880 form a helical membrane-spanning segment; the sequence is ATVVIVVCVSFLVFMIILGVF. Residues 881–979 lie on the Cytoplasmic side of the membrane; it reads RIRAAHQRTM…LEWDDSTLSY (99 aa). Residues 915–979 are disordered; it reads METYEDQHSS…LEWDDSTLSY (65 aa). Acidic residues predominate over residues 925 to 959; sequence EEEEEEEEEEESEDGEEEEDITSAESESSEEEEGG.

The protein belongs to the calsyntenin family. In terms of assembly, directly interacts with APBA2. Forms a tripartite complex with APBA2 and APP. The CTF1 chain interacts with PSEN1. Interacts with KLC1 and APBB1. Interacts with APBB1; this interaction stabilizes AlcICD metabolism. As to quaternary structure, interacts with PSEN1. Post-translationally, proteolytically processed under normal cellular conditions. A primary zeta-cleavage generates a large extracellular (soluble) N-terminal domain (sAlc) and a short C-terminal transmembrane fragment (CTF1). A secondary cleavage catalyzed by presenilin gamma-secretase within the transmembrane domain releases the beta-Alc-alpha chain in the extracellular milieu and produces an intracellular fragment (AlcICD). Beta-Alc-alpha secretion is largely dependent upon PSEN1 and PSEN2. This processing is strongly suppressed in the tripartite complex formed with APBA2 and APP, which seems to prevent the association with PSEN1. In terms of tissue distribution, highly expressed in the brain (at protein level), with over 90% of the neurons expressing detectable amounts. In the brain, relatively high levels in the cerebral cortex, striatum, hippocampus and thalamus. Moderate levels in the cerebellum. Low levels in the olfactory bulb, midbrain and pons (at protein level). Not detected in Purkinje cells. Expressed at low levels in the lung (at protein level). At the mRNA level, weakly detected in the kidney, lung, skeletal muscle, heart and testis. Not expressed in the sciatic nerve fiber.

It is found in the postsynaptic cell membrane. Its subcellular location is the endoplasmic reticulum membrane. The protein resides in the golgi apparatus membrane. The protein localises to the cell projection. It localises to the neuron projection. It is found in the vesicle. Its subcellular location is the nucleus. Postsynaptic adhesion molecule that binds to presynaptic neurexins to mediate both excitatory and inhibitory synapse formation. Promotes synapse development by acting as a cell adhesion molecule at the postsynaptic membrane, which associates with neurexin-alpha at the presynaptic membrane. Also functions as a cargo in axonal anterograde transport by acting as a molecular adapter that promotes KLC1 association with vesicles. Complex formation with APBA2 and APP, stabilizes APP metabolism and enhances APBA2-mediated suppression of beta-APP40 secretion, due to the retardation of intracellular APP maturation. Functionally, as intracellular fragment AlcICD, suppresses APBB1-dependent transactivation stimulated by APP C-terminal intracellular fragment (AICD), most probably by competing with AICD for APBB1-binding. Its function is as follows. In complex with APBA2 and C99, a C-terminal APP fragment, abolishes C99 interaction with PSEN1 and thus APP C99 cleavage by gamma-secretase, most probably through stabilization of the direct interaction between APBA2 and APP. In Mus musculus (Mouse), this protein is Calsyntenin-1.